Reading from the N-terminus, the 229-residue chain is Ras-related protein Rab-33B (229 aa).

GTP contacts are provided by Asn-43, Val-44, Gly-45, Lys-46, Thr-47, Cys-48, Thr-62, and Thr-65. Thr-47 is a Mg(2+) binding site. The Switch 1 motif lies at 56–68 (GRFPDRTEATIGV). 2 residues coordinate Mg(2+): Thr-65 and Asp-88. A Switch 2 motif is present at residues 89 to 108 (TAGQERFRKSMVQHYYRNVH). Residues Gly-91, Asn-148, Lys-149, Asp-151, Ala-179, and Lys-180 each coordinate GTP. Residues Cys-227 and Cys-229 are each lipidated (S-geranylgeranyl cysteine). A Cysteine methyl ester modification is found at Cys-229.

The protein belongs to the small GTPase superfamily. Rab family. As to quaternary structure, interacts (GTP- and GDP-bound forms) with ATG16L1; the complex consists of a tetramer where two RAB33B molecules bind independently one molecule of the ATG16L1 homodimer; the interaction promotes ATG12-ATG5-ATG16L1 complex recruitment to phagophores. Interacts with ATG16L2; however interaction is approximately hundred times lower than for ATG16L1. Interacts with RIC1 (via C-terminus domain); the interaction is direct with a preference for RAB33B-GTP. Interacts with RGP1. Mg(2+) serves as cofactor. Post-translationally, prenylated. In terms of tissue distribution, ubiquitous.

The protein resides in the golgi apparatus membrane. Its subcellular location is the golgi apparatus. It localises to the cis-Golgi network. The protein localises to the preautophagosomal structure membrane. The catalysed reaction is GTP + H2O = GDP + phosphate + H(+). With respect to regulation, regulated by guanine nucleotide exchange factors (GEFs) which promote the exchange of bound GDP for free GTP. Regulated by GTPase activating proteins (GAPs) such as SGSM2 which increase the GTP hydrolysis activity. Inhibited by GDP dissociation inhibitors (GDIs). Its function is as follows. The small GTPases Rab are key regulators of intracellular membrane trafficking, from the formation of transport vesicles to their fusion with membranes. Rabs cycle between an inactive GDP-bound form and an active GTP-bound form that is able to recruit to membranes different sets of downstream effectors directly responsible for vesicle formation, movement, tethering and fusion. RAB33B acts, in coordination with RAB6A, to regulate intra-Golgi retrograde trafficking. Participates in autophagosome formation by recruiting the ATG12-ATG5-ATG16L1 complex to phagophores, probably in a nucleotide-independent manner. In Mus musculus (Mouse), this protein is Ras-related protein Rab-33B.